We begin with the raw amino-acid sequence, 177 residues long: HVA22-like protein a (177 aa).

The next 3 helical transmembrane spans lie at Val18–Glu38, Gln47–Lys67, and Leu68–Ile88.

This sequence belongs to the DP1 family. Predominantly expressed in flower buds and stem.

The protein resides in the membrane. In Arabidopsis thaliana (Mouse-ear cress), this protein is HVA22-like protein a (HVA22A).